We begin with the raw amino-acid sequence, 76 residues long: ATP synthase subunit 9, mitochondrial (76 aa).

Met1 carries the N-formylmethionine modification. 2 helical membrane passes run 14 to 34 (ISTIGLLGAGIGIAIVFAALI) and 52 to 72 (ILGFALSEATGLFCLMVSFLL).

It belongs to the ATPase C chain family. F-type ATPases have 2 components, CF(1) - the catalytic core - and CF(0) - the membrane proton channel. In yeast, the dimeric form of ATP synthase consists of 18 polypeptides: alpha, beta, gamma, delta, epsilon, 4 (B), 5 (OSCP), 6 (A), 8, 9 (C), d, E (Tim11), f, g, h, i, j and k.

It is found in the mitochondrion membrane. Its function is as follows. Mitochondrial membrane ATP synthase (F(1)F(0) ATP synthase or Complex V) produces ATP from ADP in the presence of a proton gradient across the membrane which is generated by electron transport complexes of the respiratory chain. F-type ATPases consist of two structural domains, F(1) - containing the extramembraneous catalytic core and F(0) - containing the membrane proton channel, linked together by a central stalk and a peripheral stalk. During catalysis, ATP synthesis in the catalytic domain of F(1) is coupled via a rotary mechanism of the central stalk subunits to proton translocation. Part of the complex F(0) domain. A homomeric c-ring of probably 10 subunits is part of the complex rotary element. The sequence is that of ATP synthase subunit 9, mitochondrial (ATP9) from Saccharomyces paradoxus (Yeast).